The following is a 235-amino-acid chain: Dual specificity protein phosphatase 15 (235 aa).

The N-myristoyl glycine moiety is linked to residue Gly-2. One can recognise a Tyrosine-protein phosphatase domain in the interval 4-144; it reads GMTKVLPGLY…LEEFGWANSQ (141 aa). The active-site Phosphocysteine intermediate is Cys-88. Residues 183–193 show a composition bias toward low complexity; that stretch reads AASATTASSAA. The disordered stretch occupies residues 183-212; sequence AASATTASSAAEGTLQRLVPRSPRDSHQPL.

Belongs to the protein-tyrosine phosphatase family. Non-receptor class dual specificity subfamily. As to expression, isoform 1 is expressed in testis; predominantly in developing spermatocytes (at protein level). Isoform 2 is highly expressed in testis. Expressed in spinal cord and specifically in oligodendroglial cells. Expressed in embryonic brain cortex; down-regulated in mice with experimental autoimmune encephalomyelitis (EAE).

It is found in the cell membrane. It catalyses the reaction O-phospho-L-tyrosyl-[protein] + H2O = L-tyrosyl-[protein] + phosphate. It carries out the reaction O-phospho-L-seryl-[protein] + H2O = L-seryl-[protein] + phosphate. The catalysed reaction is O-phospho-L-threonyl-[protein] + H2O = L-threonyl-[protein] + phosphate. In terms of biological role, may dephosphorylate MAPK13, ATF2, ERBB3, PDGFRB and SNX6. Functionally, may play a role in the regulation of oligodendrocyte differentiation. May play a role in the regulation of myelin formation. Involved in the regulation of Erk1/2 phosphorylation in Schwann cells; the signaling may be linked to the regulation of myelination. The protein is Dual specificity protein phosphatase 15 of Mus musculus (Mouse).